We begin with the raw amino-acid sequence, 493 residues long: Ketol-acid reductoisomerase (NADP(+)) (493 aa).

The 195-residue stretch at 14-208 (LDQLGRCRFM…GGDRAGVLES (195 aa)) folds into the KARI N-terminal Rossmann domain. NADP(+) contacts are provided by residues 45–48 (CGAQ), R68, R76, S78, and 108–110 (DKQ). H132 is an active-site residue. G158 serves as a coordination point for NADP(+). 2 consecutive KARI C-terminal knotted domains span residues 209–345 (SFVA…APKA) and 346–486 (DGIK…MTDM). 4 residues coordinate Mg(2+): D217, E221, E390, and E394. S415 serves as a coordination point for substrate.

The protein belongs to the ketol-acid reductoisomerase family. Requires Mg(2+) as cofactor.

It carries out the reaction (2R)-2,3-dihydroxy-3-methylbutanoate + NADP(+) = (2S)-2-acetolactate + NADPH + H(+). It catalyses the reaction (2R,3R)-2,3-dihydroxy-3-methylpentanoate + NADP(+) = (S)-2-ethyl-2-hydroxy-3-oxobutanoate + NADPH + H(+). Its pathway is amino-acid biosynthesis; L-isoleucine biosynthesis; L-isoleucine from 2-oxobutanoate: step 2/4. The protein operates within amino-acid biosynthesis; L-valine biosynthesis; L-valine from pyruvate: step 2/4. Functionally, involved in the biosynthesis of branched-chain amino acids (BCAA). Catalyzes an alkyl-migration followed by a ketol-acid reduction of (S)-2-acetolactate (S2AL) to yield (R)-2,3-dihydroxy-isovalerate. In the isomerase reaction, S2AL is rearranged via a Mg-dependent methyl migration to produce 3-hydroxy-3-methyl-2-ketobutyrate (HMKB). In the reductase reaction, this 2-ketoacid undergoes a metal-dependent reduction by NADPH to yield (R)-2,3-dihydroxy-isovalerate. In Actinobacillus succinogenes (strain ATCC 55618 / DSM 22257 / CCUG 43843 / 130Z), this protein is Ketol-acid reductoisomerase (NADP(+)).